We begin with the raw amino-acid sequence, 101 residues long: MVCEKCEKKLGRVITPDTWKDGARNTTESGGRKLNENKALTSKKARFDPYGKNKFSTCRICKSSVHQPGSHYCQGCAYKKGICAMCGKKVLDTKNYKQTSV.

The interval 19–38 (WKDGARNTTESGGRKLNENK) is disordered. Residues 95–101 (NYKQTSV) form a sufficient for interaction with DLG4 region. The segment at 98 to 101 (QTSV) is PDZ3-binding.

This sequence belongs to the CRIPT family. Component of the minor spliceosome. Within this complex, interacts with RNF113A, as well as with SF3B1/SF3b155, SF3B2/SF3b145 and PHF5A/SF3b14b. Interacts with TUBB1. Interacts strongly with the PDZ3 domain of members of the DLG4 family. Associates with microtubules. Interacts with DLG4.

It is found in the cytoplasm. It localises to the synapse. The protein resides in the cell projection. Its subcellular location is the dendritic spine. Functionally, as a component of the minor spliceosome, involved in the splicing of U12-type introns in pre-mRNAs. Involved in the cytoskeletal anchoring of DLG4 in excitatory synapses. This is Cysteine-rich PDZ-binding protein (Cript) from Mus musculus (Mouse).